Consider the following 121-residue polypeptide: Small ribosomal subunit protein uS13 (121 aa).

Positions 93-121 (RHLPVRGQNTKNNARTRKGPAVSIAGKKK) are disordered.

This sequence belongs to the universal ribosomal protein uS13 family. Part of the 30S ribosomal subunit. Forms a loose heterodimer with protein S19. Forms two bridges to the 50S subunit in the 70S ribosome.

Located at the top of the head of the 30S subunit, it contacts several helices of the 16S rRNA. In the 70S ribosome it contacts the 23S rRNA (bridge B1a) and protein L5 of the 50S subunit (bridge B1b), connecting the 2 subunits; these bridges are implicated in subunit movement. Contacts the tRNAs in the A and P-sites. This Ligilactobacillus salivarius (strain UCC118) (Lactobacillus salivarius) protein is Small ribosomal subunit protein uS13.